A 474-amino-acid chain; its full sequence is Chromosomal replication initiator protein DnaA (474 aa).

The interval 1–91 (MSEELWQRCL…STRASTPAAS (91 aa)) is domain I, interacts with DnaA modulators. Positions 89–138 (AASYFNGSSSSSSNGPITTPAAAPAPRQPESDSRPQPTSLGGARKHRSNL) are disordered. Positions 91-136 (SYFNGSSSSSSNGPITTPAAAPAPRQPESDSRPQPTSLGGARKHRS) are domain II. Residues 96 to 113 (SSSSSSNGPITTPAAAPA) show a composition bias toward low complexity. The segment at 137–354 (NLNTGFTFST…GALRRVIAHV (218 aa)) is domain III, AAA+ region. ATP is bound by residues Gly182, Gly184, Lys185, and Thr186. The tract at residues 355 to 474 (RFTGAQIDIG…YLNLLRTLTS (120 aa)) is domain IV, binds dsDNA.

This sequence belongs to the DnaA family. In terms of assembly, oligomerizes as a right-handed, spiral filament on DNA at oriC.

The protein resides in the cytoplasm. Its function is as follows. Plays an essential role in the initiation and regulation of chromosomal replication. ATP-DnaA binds to the origin of replication (oriC) to initiate formation of the DNA replication initiation complex once per cell cycle. Binds the DnaA box (a 9 base pair repeat at the origin) and separates the double-stranded (ds)DNA. Forms a right-handed helical filament on oriC DNA; dsDNA binds to the exterior of the filament while single-stranded (ss)DNA is stabiized in the filament's interior. The ATP-DnaA-oriC complex binds and stabilizes one strand of the AT-rich DNA unwinding element (DUE), permitting loading of DNA polymerase. After initiation quickly degrades to an ADP-DnaA complex that is not apt for DNA replication. Binds acidic phospholipids. The polypeptide is Chromosomal replication initiator protein DnaA (Alcanivorax borkumensis (strain ATCC 700651 / DSM 11573 / NCIMB 13689 / SK2)).